The following is a 196-amino-acid chain: NADH-quinone oxidoreductase subunit C (196 aa).

The protein belongs to the complex I 30 kDa subunit family. As to quaternary structure, NDH-1 is composed of 14 different subunits. Subunits NuoB, C, D, E, F, and G constitute the peripheral sector of the complex.

The protein localises to the cell inner membrane. The enzyme catalyses a quinone + NADH + 5 H(+)(in) = a quinol + NAD(+) + 4 H(+)(out). Functionally, NDH-1 shuttles electrons from NADH, via FMN and iron-sulfur (Fe-S) centers, to quinones in the respiratory chain. The immediate electron acceptor for the enzyme in this species is believed to be ubiquinone. Couples the redox reaction to proton translocation (for every two electrons transferred, four hydrogen ions are translocated across the cytoplasmic membrane), and thus conserves the redox energy in a proton gradient. The chain is NADH-quinone oxidoreductase subunit C from Rickettsia bellii (strain RML369-C).